Consider the following 190-residue polypeptide: UPF0232 protein SCO3875 (190 aa).

2 disordered regions span residues 1–70 and 163–190; these read MSAD…GRDP and GPGG…DTYG. Residues 26 to 35 are compositionally biased toward low complexity; sequence GVDLARVALR. Basic and acidic residues predominate over residues 36-45; that stretch reads AAREAARARG. Over residues 163–172 the composition is skewed to gly residues; the sequence is GPGGPGGPGR.

Belongs to the UPF0232 family.

In Streptomyces coelicolor (strain ATCC BAA-471 / A3(2) / M145), this protein is UPF0232 protein SCO3875.